The sequence spans 389 residues: Serpentine receptor class alpha/beta-14 (389 aa).

Topologically, residues 1-45 (MPSDDFVKTARKALISHSVSIQNYTEDDCQIAFHATTNSFMQTIR) are extracellular. N23 carries N-linked (GlcNAc...) asparagine glycosylation. The chain crosses the membrane as a helical span at residues 46–66 (LVHIFFCTFGAISSSLFIYVL). At 67–81 (LNSSSRNLHRNLRIS) the chain is on the cytoplasmic side. The chain crosses the membrane as a helical span at residues 82 to 102 (LASLAFAALIACLQLDFIAFY). Residues 103-123 (HLALTLTADNACDSMYEARKC) lie on the Extracellular side of the membrane. C123 and C198 form a disulfide bridge. The chain crosses the membrane as a helical span at residues 124-144 (AILRFPVVLSIYATLCGIIVL). The Cytoplasmic segment spans residues 145–167 (AIERTIATLKYKTYEANGSRVVG). A helical transmembrane segment spans residues 168–188 (LVLVTGQWFVCIIVAVFSVLL). The Extracellular segment spans residues 189–208 (RSDPGYVHYCTAYVSHPRTS). Residues 209 to 229 (VFSLCFMSALEVATLVYFVLL) traverse the membrane as a helical segment. Topologically, residues 230–268 (LQSNQRRQVNEFVNKAMHSLSERYQLQENVRIMKILIPS) are cytoplasmic. A helical transmembrane segment spans residues 269–289 (ITVHAILGFIGLGSMLAFAII). Residues 290 to 303 (YRYADERLIVGFAP) are Extracellular-facing. The helical transmembrane segment at 304–324 (FSEVVLLVIPIYAVVFPIVAV) threads the bilayer. The Cytoplasmic portion of the chain corresponds to 325-389 (VQNKQLRLAS…FDLLNEMWKK (65 aa)).

It belongs to the nematode receptor-like protein srab family.

It localises to the membrane. The protein is Serpentine receptor class alpha/beta-14 of Caenorhabditis elegans.